The primary structure comprises 67 residues: MARITVEDCLKQIPNRFELALAATYRARQLVQGHTPKVDAKDKPTVTALREIAAGQVGIEMLKKVPS.

It belongs to the RNA polymerase subunit omega family. As to quaternary structure, the RNAP catalytic core consists of 2 alpha, 1 beta, 1 beta' and 1 omega subunit. When a sigma factor is associated with the core the holoenzyme is formed, which can initiate transcription.

The enzyme catalyses RNA(n) + a ribonucleoside 5'-triphosphate = RNA(n+1) + diphosphate. Promotes RNA polymerase assembly. Latches the N- and C-terminal regions of the beta' subunit thereby facilitating its interaction with the beta and alpha subunits. This chain is DNA-directed RNA polymerase subunit omega, found in Ralstonia nicotianae (strain ATCC BAA-1114 / GMI1000) (Ralstonia solanacearum).